The chain runs to 392 residues: Probable tRNA sulfurtransferase (392 aa).

Residues 61–168 (DEALKLLSKV…EFTYIYSEII (108 aa)) form the THUMP domain. Residues 185–186 (LL), 210–211 (HF), R267, G289, and Q298 each bind ATP.

This sequence belongs to the ThiI family.

The protein localises to the cytoplasm. It catalyses the reaction [ThiI sulfur-carrier protein]-S-sulfanyl-L-cysteine + a uridine in tRNA + 2 reduced [2Fe-2S]-[ferredoxin] + ATP + H(+) = [ThiI sulfur-carrier protein]-L-cysteine + a 4-thiouridine in tRNA + 2 oxidized [2Fe-2S]-[ferredoxin] + AMP + diphosphate. The catalysed reaction is [ThiS sulfur-carrier protein]-C-terminal Gly-Gly-AMP + S-sulfanyl-L-cysteinyl-[cysteine desulfurase] + AH2 = [ThiS sulfur-carrier protein]-C-terminal-Gly-aminoethanethioate + L-cysteinyl-[cysteine desulfurase] + A + AMP + 2 H(+). It participates in cofactor biosynthesis; thiamine diphosphate biosynthesis. Its function is as follows. Catalyzes the ATP-dependent transfer of a sulfur to tRNA to produce 4-thiouridine in position 8 of tRNAs, which functions as a near-UV photosensor. Also catalyzes the transfer of sulfur to the sulfur carrier protein ThiS, forming ThiS-thiocarboxylate. This is a step in the synthesis of thiazole, in the thiamine biosynthesis pathway. The sulfur is donated as persulfide by IscS. This Acetivibrio thermocellus (strain ATCC 27405 / DSM 1237 / JCM 9322 / NBRC 103400 / NCIMB 10682 / NRRL B-4536 / VPI 7372) (Clostridium thermocellum) protein is Probable tRNA sulfurtransferase.